The primary structure comprises 174 residues: MTLILGIDPGSRITGYGVVRQTARGCEYVASGCIRTGSGELHERLQIVFRGVSEIIAQHGPVTMGIERVFMARNADSALKLGQARGAAIVAAAEAGLEIAEYSATQVKQAVAGTGGANKEQVMMMVMHLLKLTQKPQIDASDALAIALCHAHTRSSLVPHGLATARRRGGRLRL.

Residues D8, E67, and D139 contribute to the active site. The Mg(2+) site is built by D8, E67, and D139.

Belongs to the RuvC family. In terms of assembly, homodimer which binds Holliday junction (HJ) DNA. The HJ becomes 2-fold symmetrical on binding to RuvC with unstacked arms; it has a different conformation from HJ DNA in complex with RuvA. In the full resolvosome a probable DNA-RuvA(4)-RuvB(12)-RuvC(2) complex forms which resolves the HJ. Requires Mg(2+) as cofactor.

The protein localises to the cytoplasm. The catalysed reaction is Endonucleolytic cleavage at a junction such as a reciprocal single-stranded crossover between two homologous DNA duplexes (Holliday junction).. Functionally, the RuvA-RuvB-RuvC complex processes Holliday junction (HJ) DNA during genetic recombination and DNA repair. Endonuclease that resolves HJ intermediates. Cleaves cruciform DNA by making single-stranded nicks across the HJ at symmetrical positions within the homologous arms, yielding a 5'-phosphate and a 3'-hydroxyl group; requires a central core of homology in the junction. The consensus cleavage sequence is 5'-(A/T)TT(C/G)-3'. Cleavage occurs on the 3'-side of the TT dinucleotide at the point of strand exchange. HJ branch migration catalyzed by RuvA-RuvB allows RuvC to scan DNA until it finds its consensus sequence, where it cleaves and resolves the cruciform DNA. The chain is Crossover junction endodeoxyribonuclease RuvC from Pseudomonas putida (strain GB-1).